A 497-amino-acid polypeptide reads, in one-letter code: Acetyl-coenzyme A carboxylase carboxyl transferase subunit beta (497 aa).

One can recognise a CoA carboxyltransferase N-terminal domain in the interval 217–489; that stretch reads LWLQCDNCYG…NQNSNQYSQY (273 aa). Zn(2+) contacts are provided by Cys221, Cys224, Cys240, and Cys243. The C4-type zinc finger occupies 221–243; it reads CDNCYGLNYKKVLKSKMTICEQC.

It belongs to the AccD/PCCB family. Acetyl-CoA carboxylase is a heterohexamer composed of biotin carboxyl carrier protein, biotin carboxylase and 2 subunits each of ACCase subunit alpha and ACCase plastid-coded subunit beta (accD). The cofactor is Zn(2+).

Its subcellular location is the plastid. It carries out the reaction N(6)-carboxybiotinyl-L-lysyl-[protein] + acetyl-CoA = N(6)-biotinyl-L-lysyl-[protein] + malonyl-CoA. Its pathway is lipid metabolism; malonyl-CoA biosynthesis; malonyl-CoA from acetyl-CoA: step 1/1. Component of the acetyl coenzyme A carboxylase (ACC) complex. Biotin carboxylase (BC) catalyzes the carboxylation of biotin on its carrier protein (BCCP) and then the CO(2) group is transferred by the transcarboxylase to acetyl-CoA to form malonyl-CoA. This chain is Acetyl-coenzyme A carboxylase carboxyl transferase subunit beta, found in Cuscuta reflexa (Southern Asian dodder).